The chain runs to 796 residues: Cadherin-11 (796 aa).

The first 22 residues, 1–22 (MKENYCLQAALVCLGMLCHSHA), serve as a signal peptide directing secretion. The propeptide occupies 23 to 53 (FAPERRGHLRPSFHGHHEKGKEGQVLQRSKR). Cadherin domains lie at 54-159 (GWVW…PPEF), 160-268 (LHET…PPKF), 269-383 (PQSV…PPMF), 384-486 (LAPS…DNAP), and 487-612 (KFAA…YILN). At 54-617 (GWVWNQFFVI…AYILNAGLST (564 aa)) the chain is on the extracellular side. 2 N-linked (GlcNAc...) asparagine glycosylation sites follow: Asn455 and Asn540. A helical membrane pass occupies residues 618 to 640 (GALIAILACIVILLVIVVLFVTL). Topologically, residues 641 to 796 (RRQKKEPLIV…GSKDTFDDDS (156 aa)) are cytoplasmic. Ser788 is subject to Phosphoserine. Residue Thr791 is modified to Phosphothreonine.

In terms of assembly, interacts with PCDH8. In terms of tissue distribution, expressed mainly in brain but also found in other tissues. Expressed in neuroblasts. In the embryo from 67 to 72 days of gestation, detected at high levels in facial mesenchyme including the central palatal mesenchyme, dental mesenchyme, the eye and optic muscle, and the tongue (at protein level).

The protein resides in the cell membrane. In terms of biological role, cadherins are calcium-dependent cell adhesion proteins. They preferentially interact with themselves in a homophilic manner in connecting cells; cadherins may thus contribute to the sorting of heterogeneous cell types. Required for proper focal adhesion assembly. Involved in the regulation of cell migration. This is Cadherin-11 (CDH11) from Homo sapiens (Human).